We begin with the raw amino-acid sequence, 423 residues long: uncharacterized protein (423 aa).

Positions 181, 183, and 184 each coordinate Mg(2+). K181 is subject to N6-carboxylysine.

It belongs to the RuBisCO large chain family. Type IV subfamily. Mg(2+) serves as cofactor.

Its function is as follows. May be involved in sulfur metabolism and oxidative stress response. Does not show RuBisCO activity. This is an uncharacterized protein from Bordetella bronchiseptica (strain ATCC BAA-588 / NCTC 13252 / RB50) (Alcaligenes bronchisepticus).